Reading from the N-terminus, the 383-residue chain is Gap junction alpha-1 protein (383 aa).

At 2–23 (GDWSALGKLLDKVQAYSTAGGK) the chain is on the cytoplasmic side. The residue at position 5 (S5) is a Phosphoserine. Residues 24-44 (VWLSVLFIFRILLLGTAVESA) form a helical membrane-spanning segment. Over 45 to 76 (WGDEQSAFRCNTQQPGCENVCYDKSFPISHVR) the chain is Extracellular. Intrachain disulfides connect C54–C193 and C188–C199. A helical transmembrane segment spans residues 77–97 (FWVLQIIFVSVPTLLYLAHVF). Residues 98–156 (YVMRKEEKLNKKEEELKVVAQTDGANVDMHLKQIEIKKFKYGIEEHGKVKMRGGLLRTY) lie on the Cytoplasmic side of the membrane. K145 is covalently cross-linked (Glycyl lysine isopeptide (Lys-Gly) (interchain with G-Cter in SUMO)). Residues 157–177 (IISILFKSVFEVAFLLIQWYI) traverse the membrane as a helical segment. The Extracellular portion of the chain corresponds to 178–208 (YGFSLSAVYTCKRDPCPHQVDCFLSRPTEKT). A helical membrane pass occupies residues 209 to 229 (IFIIFMLVVSLVSLALNIIEL). Residues 230–383 (FYVFFKGVKD…SRPRPDDLEI (154 aa)) are Cytoplasmic-facing. K238 is covalently cross-linked (Glycyl lysine isopeptide (Lys-Gly) (interchain with G-Cter in SUMO)). Positions 245-383 (SDPYHTTTGP…SRPRPDDLEI (139 aa)) are interaction with NOV. A Phosphotyrosine modification is found at Y248. Residues S256, S258, and S263 each carry the phosphoserine modification. An interaction with UBQLN4 region spans residues 265–383 (KYAYFNGCSS…SRPRPDDLEI (119 aa)). S-nitrosocysteine is present on C272. Phosphothreonine is present on T276. A phosphoserine mark is found at S307 and S315. Over residues 318–333 (QNRMGQAGSTISNSHA) the composition is skewed to polar residues. The disordered stretch occupies residues 318 to 383 (QNRMGQAGST…SRPRPDDLEI (66 aa)). At S326 the chain carries Phosphoserine; by CK1. Position 327 is a phosphothreonine (T327). Phosphoserine; by CK1 is present on residues S329 and S331. A compositionally biased stretch (basic and acidic residues) spans 339–352 (PDDHQNSKKLDAGH). Phosphoserine occurs at positions 345 and 366. Residues 363 to 375 (RPSSRASSRASSR) are compositionally biased toward low complexity. At S369 the chain carries Phosphoserine; by PKC/PRKCG and PKC/PRKCD. A phosphoserine mark is found at S370 and S374.

It belongs to the connexin family. Alpha-type (group II) subfamily. In terms of assembly, a connexon is composed of a hexamer of connexins. Interacts with SGSM3. Interacts with RIC1/CIP150. Interacts with CNST and CSNK1D. Interacts (via C-terminus) with TJP1. Interacts (via C-terminus) with SRC (via SH3 domain). Interacts (not ubiquitinated) with UBQLN4 (via UBA domain). Interacts with NOV. Interacts with TMEM65. Interacts with ANK3/ANKG and PKP2. In terms of processing, phosphorylation at Ser-326, Ser-329 and Ser-331 by CK1 modulates gap junction assembly. Phosphorylated at Ser-369 by PRKCG; phosphorylation induces disassembly of gap junction plaques and inhibition of gap junction activity. Phosphorylation at Ser-369 by PRKCD triggers its internalization into small vesicles leading to proteasome-mediated degradation. Post-translationally, sumoylated with SUMO1, SUMO2 and SUMO3, which may regulate the level of functional Cx43 gap junctions at the plasma membrane. May be desumoylated by SENP1 or SENP2. Acetylated in the developing cortex; leading to delocalization from the cell membrane.

The protein resides in the cell membrane. It is found in the cell junction. The protein localises to the gap junction. Its subcellular location is the endoplasmic reticulum. Functionally, gap junction protein that acts as a regulator of bladder capacity. A gap junction consists of a cluster of closely packed pairs of transmembrane channels, the connexons, through which materials of low MW diffuse from one cell to a neighboring cell. May play a critical role in the physiology of hearing by participating in the recycling of potassium to the cochlear endolymph. Negative regulator of bladder functional capacity: acts by enhancing intercellular electrical and chemical transmission, thus sensitizing bladder muscles to cholinergic neural stimuli and causing them to contract. May play a role in cell growth inhibition through the regulation of NOV expression and localization. Plays an essential role in gap junction communication in the ventricles. The polypeptide is Gap junction alpha-1 protein (GJA1) (Bos taurus (Bovine)).